A 349-amino-acid chain; its full sequence is N-acetyltaurine hydrolase (349 aa).

A divalent metal cation is bound by residues His-26, His-28, Glu-169, His-201, His-230, and Asp-298.

This sequence belongs to the metallo-dependent hydrolases superfamily. Phosphotriesterase family. The cofactor is a divalent metal cation. Expressed primarily in proximal tubules of the kidney.

The protein localises to the cytoplasm. It is found in the cytosol. The enzyme catalyses N-acetyltaurine + H2O = taurine + acetate. It catalyses the reaction N-propanoyltaurine + H2O = propanoate + taurine. The catalysed reaction is N-acetyl-L-methionine + H2O = L-methionine + acetate. It carries out the reaction N-acetyl-L-isoleucine + H2O = L-isoleucine + acetate. The enzyme catalyses N-acetyl-L-leucine + H2O = L-leucine + acetate. It catalyses the reaction N-acetyl-L-valine + H2O = L-valine + acetate. Its function is as follows. N-acetyltaurine hydrolase that regulates feeding by catalyzing the hydrolysis of N-acetyltaurine into taurine and acetate. N-acetyltaurine has anorexigenic and anti-obesity effects that are dependent on GFRAL receptor and GDF15. PTER also acts on other N-acetyl amino acids (Met, Ile, Leu, Val) and N-propionyltaurine, but at lower rates. Binds resiniferotoxin, a vanilloid that desensitizes nociceptive neurons. This chain is N-acetyltaurine hydrolase, found in Rattus norvegicus (Rat).